The primary structure comprises 628 residues: Otolith matrix protein OMM-64 (628 aa).

Residues 1 to 20 (MLSRLLIVPLIFALAGLAIS) form the signal peptide. The segment at 43–628 (KGDKDGGGLT…AAATALAAQS (586 aa)) is disordered. The span at 78-93 (DSSPDTTDTPDASSSD) shows a compositional bias: low complexity. A compositionally biased stretch (polar residues) spans 182-214 (TESPGSDSAESPGSDSAESPGSDSTESPGSDST). Composition is skewed to basic and acidic residues over residues 246-266 (ETDK…ATDK), 276-285 (ELDGKAHAED), and 311-343 (RPEK…RDSA). The N-linked (GlcNAc...) asparagine glycan is linked to N318. Acidic residues-rich tracts occupy residues 449–462 (DSQE…EAEP), 477–489 (EPQE…DTDD), 514–536 (DKED…MDKD), 544–556 (DSVD…DAEP), and 565–578 (DEID…PDSE). The span at 613–628 (ASQAADAAATALAAQS) shows a compositional bias: low complexity.

Specifically expressed in otolith matrix-producing cells.

It localises to the secreted. The protein localises to the extracellular space. The protein resides in the extracellular matrix. Its function is as follows. Calcium-binding component of otoliths, a calcium carbonate structure of the inner ear involved in hearing and balance sensing. Binds calcium. This chain is Otolith matrix protein OMM-64, found in Oncorhynchus mykiss (Rainbow trout).